The chain runs to 862 residues: Protein kintoun (862 aa).

Disordered regions lie at residues 208–229 (KLLP…RTTK), 564–602 (TKRE…KKER), 626–670 (GEGA…STMP), and 743–854 (RREV…QFKS). Basic and acidic residues predominate over residues 564–586 (TKREEHGEPECDEKDGSEAEKAR). The span at 587 to 601 (TLQKAKRNSRKKKKE) shows a compositional bias: basic residues. 2 stretches are compositionally biased toward basic and acidic residues: residues 748–757 (RRADARRMSE) and 766–785 (KDAH…HDEK).

The protein belongs to the PIH1 family. Kintoun subfamily.

The protein localises to the cytoplasm. In terms of biological role, required for cytoplasmic pre-assembly of axonemal dyneins, thereby playing a central role in motility in cilia and flagella. Involved in pre-assembly of dynein arm complexes in the cytoplasm before intraflagellar transport loads them for the ciliary compartment. The protein is Protein kintoun of Anopheles gambiae (African malaria mosquito).